A 248-amino-acid polypeptide reads, in one-letter code: Isopentenyl phosphate kinase (248 aa).

7 to 11 (KLGGS) is an ATP binding site. Gly-49 provides a ligand contact to substrate. Gly-50 is a binding site for ATP. The substrate site is built by His-54 and Gly-152. Residues Gly-209 and Lys-213 each contribute to the ATP site.

The protein belongs to the isopentenyl phosphate kinase family. Homodimer.

It carries out the reaction isopentenyl phosphate + ATP = isopentenyl diphosphate + ADP. Catalyzes the phosphorylation of isopentenyl phosphate (IP) to isopentenyl diphosphate (IPP). Functions in an alternate mevalonate (MVA) pathway leading to IPP, a key precursor for the biosynthesis of isoprenoid compounds such as archaeal membrane lipids. The chain is Isopentenyl phosphate kinase from Haloferax volcanii (strain ATCC 29605 / DSM 3757 / JCM 8879 / NBRC 14742 / NCIMB 2012 / VKM B-1768 / DS2) (Halobacterium volcanii).